A 107-amino-acid chain; its full sequence is QILLTQSPAIMSASPGQKVTMTCSASSSVSYMHWYQQKSGTSPKRWIYDTSKLASGVPARFXGSGSATSYSLTITSMQAEDAATYYCQQWSSNPLTFGSGTKLEXKR.

The segment at 1-23 (QILLTQSPAIMSASPGQKVTMTC) is framework-1. A disulfide bond links Cys23 and Cys87. The interval 24–33 (SASSSVSYMH) is complementarity-determining-1. Residues 34–48 (WYQQKSGTSPKRWIY) are framework-2. Residues 49–55 (DTSKLAS) are complementarity-determining-2. The segment at 56–87 (GVPARFXGSGSATSYSLTITSMQAEDAATYYC) is framework-3. The interval 88-96 (QQWSSNPLT) is complementarity-determining-3. Residues 97-106 (FGSGTKLEXK) are framework-4.

Its function is as follows. Anti-2-phenyl oxazolone (PHOX) Antibody. The protein is Ig kappa chain V-VI region NQ5-78.2.6 of Mus musculus (Mouse).